A 182-amino-acid polypeptide reads, in one-letter code: Putative pre-16S rRNA nuclease (182 aa).

This sequence belongs to the YqgF nuclease family.

Its subcellular location is the cytoplasm. Functionally, could be a nuclease involved in processing of the 5'-end of pre-16S rRNA. This chain is Putative pre-16S rRNA nuclease, found in Corynebacterium aurimucosum (strain ATCC 700975 / DSM 44827 / CIP 107346 / CN-1) (Corynebacterium nigricans).